A 108-amino-acid chain; its full sequence is Replication restart protein PriB (108 aa).

One can recognise an SSB domain in the interval 8–108 (IDNRFSVMGV…LHAEQIEFID (101 aa)).

This sequence belongs to the PriB family. As to quaternary structure, homodimer. Interacts with PriA and DnaT. Component of the replication restart primosome. Primosome assembly occurs via a 'hand-off' mechanism. PriA binds to replication forks, subsequently PriB then DnaT bind; DnaT then displaces ssDNA to generate the helicase loading substrate.

Functionally, involved in the restart of stalled replication forks, which reloads the replicative helicase on sites other than the origin of replication; the PriA-PriB pathway is the major replication restart pathway. During primosome assembly it facilitates complex formation between PriA and DnaT on DNA; stabilizes PriA on DNA. Stimulates the DNA unwinding activity of PriA helicase. The chain is Replication restart protein PriB from Haemophilus influenzae (strain 86-028NP).